A 391-amino-acid chain; its full sequence is Arsenite methyltransferase (391 aa).

The disordered stretch occupies residues 1–126 (MELWTHPTPA…TMVADRDPEE (126 aa)). Positions 28-39 (CSQPWATTPGTN) are enriched in polar residues. Positions 40–65 (SSDASRTPTTASASATSKPQSASARA) are enriched in low complexity. Over residues 102–116 (KRSTTCEATMSNDNE) the composition is skewed to polar residues.

This sequence belongs to the methyltransferase superfamily. Arsenite methyltransferase family.

The enzyme catalyses arsenic triglutathione + [thioredoxin]-dithiol + S-adenosyl-L-methionine + 2 H2O = methylarsonous acid + [thioredoxin]-disulfide + 3 glutathione + S-adenosyl-L-homocysteine + H(+). It catalyses the reaction arsenic triglutathione + 2 [thioredoxin]-dithiol + 2 S-adenosyl-L-methionine + H2O = dimethylarsinous acid + 2 [thioredoxin]-disulfide + 3 glutathione + 2 S-adenosyl-L-homocysteine + 2 H(+). It carries out the reaction arsenic triglutathione + 3 [thioredoxin]-dithiol + 3 S-adenosyl-L-methionine = trimethylarsine + 3 [thioredoxin]-disulfide + 3 glutathione + 3 S-adenosyl-L-homocysteine + 3 H(+). Its function is as follows. Catalyzes the transfer of a methyl group from AdoMet to arsenite, producing methylated arsenicals. The sequence is that of Arsenite methyltransferase from Halobacterium salinarum (strain ATCC 700922 / JCM 11081 / NRC-1) (Halobacterium halobium).